We begin with the raw amino-acid sequence, 346 residues long: Protein MelA (346 aa).

VOC domains lie at 12-141 (GIEF…DFEA) and 155-305 (EVDH…IFTK). Residues histidine 158, histidine 237, and glutamate 314 each coordinate Fe cation.

The protein belongs to the 4HPPD family. It depends on Fe cation as a cofactor.

It localises to the cytoplasm. It functions in the pathway pigment biosynthesis; melanin biosynthesis. The protein is Protein MelA (melA) of Shewanella colwelliana (Alteromonas colwelliana).